Consider the following 350-residue polypeptide: Legumin K (350 aa).

Disordered stretches follow at residues 37–86 and 102–170; these read LGGN…GNSV and EEDT…RKNG. Basic and acidic residues-rich tracts occupy residues 104 to 118, 141 to 150, and 160 to 170; these read DTAK…ERSQ, EQSHSHSHRE, and EKQRSEERKNG. A Cupin type-1 domain is found at 182-329; sequence ENIADAAGAD…AFGLRQRQVT (148 aa).

The protein belongs to the 11S seed storage protein (globulins) family. In terms of assembly, hexamer; each subunit is composed of an acidic and a basic chain derived from a single precursor and linked by a disulfide bond.

Functionally, this protein found in the seeds of many leguminous and non-leguminous plants is the source of sulfur-containing amino acids in seed meals. The polypeptide is Legumin K (LEGK) (Pisum sativum (Garden pea)).